We begin with the raw amino-acid sequence, 398 residues long: 2-amino-3-ketobutyrate coenzyme A ligase (398 aa).

111 to 112 is a pyridoxal 5'-phosphate binding site; it reads CF. Histidine 136 serves as a coordination point for substrate. Residues serine 185, 210 to 213, 241 to 244, and 274 to 275 contribute to the pyridoxal 5'-phosphate site; these read DDSH, TLGK, and SN. At lysine 244 the chain carries N6-(pyridoxal phosphate)lysine. Arginine 368 serves as a coordination point for substrate.

This sequence belongs to the class-II pyridoxal-phosphate-dependent aminotransferase family. In terms of assembly, homodimer. It depends on pyridoxal 5'-phosphate as a cofactor.

It catalyses the reaction glycine + acetyl-CoA = (2S)-2-amino-3-oxobutanoate + CoA. The protein operates within amino-acid degradation; L-threonine degradation via oxydo-reductase pathway; glycine from L-threonine: step 2/2. In terms of biological role, catalyzes the cleavage of 2-amino-3-ketobutyrate to glycine and acetyl-CoA. This Salmonella typhimurium (strain LT2 / SGSC1412 / ATCC 700720) protein is 2-amino-3-ketobutyrate coenzyme A ligase.